A 794-amino-acid polypeptide reads, in one-letter code: Signal transducer and activator of transcription 5A (794 aa).

A Phosphotyrosine modification is found at Tyr90. The residue at position 128 (Ser128) is a Phosphoserine. In terms of domain architecture, SH2 spans 589–686 (WNDGAILGFV…EVFSKYYTPV (98 aa)). Tyr682 is modified (phosphotyrosine). Tyr694 bears the Phosphotyrosine; by JAK2 mark. A disordered region spans residues 771-794 (PMDSLEPSLPPPTGLFTPGRGSLS).

This sequence belongs to the transcription factor STAT family. Forms a homodimer or a heterodimer with a related family member. Binds NR3C1. Interacts with NCOA1 and SOCS7. Interacts with ERBB4. Interacts with EBF4. Interacts with CD69. Post-translationally, ISGylated. In terms of processing, tyrosine phosphorylated in response to KITLG/SCF, IL2, IL3, IL7, IL15, CSF2/GMCSF, GH1, PRL, EPO and THPO. Activated KIT promotes phosphorylation on tyrosine residues and subsequent translocation to the nucleus. Tyrosine phosphorylated in response to constitutively activated FGFR1, FGFR2, FGFR3 and FGFR4. Tyrosine phosphorylation is required for DNA-binding activity and dimerization. Serine phosphorylation is also required for maximal transcriptional activity. Tyrosine phosphorylated in response to signaling via activated FLT3; wild-type FLT3 results in much weaker phosphorylation than constitutively activated mutant FLT3. Alternatively, can be phosphorylated by JAK2 at Tyr-694.

The protein resides in the cytoplasm. It is found in the nucleus. Carries out a dual function: signal transduction and activation of transcription. Mediates cellular responses to the cytokine KITLG/SCF and other growth factors. May mediate cellular responses to activated FGFR1, FGFR2, FGFR3 and FGFR4. Binds to the GAS element and activates PRL-induced transcription. Regulates the expression of milk proteins during lactation. This is Signal transducer and activator of transcription 5A (STAT5A) from Bos taurus (Bovine).